We begin with the raw amino-acid sequence, 247 residues long: Coproheme decarboxylase (247 aa).

Residues Arg-129, 143–147 (YPMDK), His-170, Gln-183, and Ser-221 each bind Fe-coproporphyrin III. Tyr-143 is an active-site residue.

It belongs to the ChdC family. Type 1 subfamily. The cofactor is Fe-coproporphyrin III.

The catalysed reaction is Fe-coproporphyrin III + 2 H2O2 + 2 H(+) = heme b + 2 CO2 + 4 H2O. The enzyme catalyses Fe-coproporphyrin III + H2O2 + H(+) = harderoheme III + CO2 + 2 H2O. It carries out the reaction harderoheme III + H2O2 + H(+) = heme b + CO2 + 2 H2O. It functions in the pathway porphyrin-containing compound metabolism; protoheme biosynthesis. Functionally, involved in coproporphyrin-dependent heme b biosynthesis. Catalyzes the decarboxylation of Fe-coproporphyrin III (coproheme) to heme b (protoheme IX), the last step of the pathway. The reaction occurs in a stepwise manner with a three-propionate intermediate. This Bacillus mycoides (strain KBAB4) (Bacillus weihenstephanensis) protein is Coproheme decarboxylase.